Consider the following 369-residue polypeptide: 4-hydroxy-3-methylbut-2-en-1-yl diphosphate synthase (flavodoxin) (369 aa).

The [4Fe-4S] cluster site is built by Cys270, Cys273, Cys305, and Glu312.

It belongs to the IspG family. [4Fe-4S] cluster is required as a cofactor.

The catalysed reaction is (2E)-4-hydroxy-3-methylbut-2-enyl diphosphate + oxidized [flavodoxin] + H2O + 2 H(+) = 2-C-methyl-D-erythritol 2,4-cyclic diphosphate + reduced [flavodoxin]. It participates in isoprenoid biosynthesis; isopentenyl diphosphate biosynthesis via DXP pathway; isopentenyl diphosphate from 1-deoxy-D-xylulose 5-phosphate: step 5/6. Converts 2C-methyl-D-erythritol 2,4-cyclodiphosphate (ME-2,4cPP) into 1-hydroxy-2-methyl-2-(E)-butenyl 4-diphosphate. This is 4-hydroxy-3-methylbut-2-en-1-yl diphosphate synthase (flavodoxin) from Pseudomonas syringae pv. tomato (strain ATCC BAA-871 / DC3000).